Reading from the N-terminus, the 255-residue chain is Adenosylcobinamide-GDP ribazoletransferase (255 aa).

6 helical membrane-spanning segments follow: residues 24–44, 45–65, 98–118, 122–142, 164–184, and 187–207; these read LIAY…SLYV, AIYG…IYIV, VGAG…ISLS, LYIG…MMMI, KHDS…ALLS, and SIMI…MAVI.

This sequence belongs to the CobS family. The cofactor is Mg(2+).

The protein localises to the cell membrane. It catalyses the reaction alpha-ribazole + adenosylcob(III)inamide-GDP = adenosylcob(III)alamin + GMP + H(+). The catalysed reaction is alpha-ribazole 5'-phosphate + adenosylcob(III)inamide-GDP = adenosylcob(III)alamin 5'-phosphate + GMP + H(+). The protein operates within cofactor biosynthesis; adenosylcobalamin biosynthesis; adenosylcobalamin from cob(II)yrinate a,c-diamide: step 7/7. In terms of biological role, joins adenosylcobinamide-GDP and alpha-ribazole to generate adenosylcobalamin (Ado-cobalamin). Also synthesizes adenosylcobalamin 5'-phosphate from adenosylcobinamide-GDP and alpha-ribazole 5'-phosphate. The chain is Adenosylcobinamide-GDP ribazoletransferase from Thermoplasma acidophilum (strain ATCC 25905 / DSM 1728 / JCM 9062 / NBRC 15155 / AMRC-C165).